The chain runs to 315 residues: Methionyl-tRNA formyltransferase (315 aa).

Residue 109 to 112 (SLLP) participates in (6S)-5,6,7,8-tetrahydrofolate binding.

This sequence belongs to the Fmt family.

The catalysed reaction is L-methionyl-tRNA(fMet) + (6R)-10-formyltetrahydrofolate = N-formyl-L-methionyl-tRNA(fMet) + (6S)-5,6,7,8-tetrahydrofolate + H(+). Functionally, attaches a formyl group to the free amino group of methionyl-tRNA(fMet). The formyl group appears to play a dual role in the initiator identity of N-formylmethionyl-tRNA by promoting its recognition by IF2 and preventing the misappropriation of this tRNA by the elongation apparatus. This chain is Methionyl-tRNA formyltransferase, found in Lachnospira eligens (strain ATCC 27750 / DSM 3376 / VPI C15-48 / C15-B4) (Eubacterium eligens).